A 951-amino-acid polypeptide reads, in one-letter code: Metal transporter CNNM1 (951 aa).

A helical transmembrane segment spans residues 23 to 43 (AVLLLFFSLSPRPPAAAAWLL). The interval 114–138 (GAGGAAPSAVPTRPPGPQRCREQSD) is disordered. Residues 218 to 414 (LLPPAWLRAL…DPYSDLVKEE (197 aa)) enclose the CNNM transmembrane domain. 3 helical membrane passes run 222-242 (AWLR…FSGL), 282-302 (LLCT…GWLY), and 319-339 (AGVH…FLGA). CBS domains lie at 433 to 495 (LTPL…CTPL) and 502 to 568 (YNRP…ILDE). Polar residues-rich tracts occupy residues 731 to 740 (SRCSGLNRSE) and 814 to 824 (KAPTTRGTPQT). Disordered stretches follow at residues 731 to 754 (SRCS…GSNT) and 795 to 830 (MDSS…DDPV). A phosphothreonine mark is found at T821 and T824. S850 carries the phosphoserine modification. The tract at residues 903-951 (DPEASPCSSDSEENMGKKLLRTLSGRKRKKSADGERASEENSNLTPLIT) is disordered. The span at 920 to 932 (KLLRTLSGRKRKK) shows a compositional bias: basic residues. Over residues 942 to 951 (ENSNLTPLIT) the composition is skewed to polar residues.

The protein belongs to the ACDP family. Predominantly expressed in brain and testis, and, at lower levels, in kidney. In the brain, expressed in hippocampal neurons (at protein level).

The protein resides in the cell membrane. Functionally, probable metal transporter. The protein is Metal transporter CNNM1 (Cnnm1) of Mus musculus (Mouse).